The sequence spans 458 residues: UDP-N-acetylmuramate--L-alanine ligase (458 aa).

115–121 is a binding site for ATP; sequence GSHGKTT.

This sequence belongs to the MurCDEF family.

It localises to the cytoplasm. The catalysed reaction is UDP-N-acetyl-alpha-D-muramate + L-alanine + ATP = UDP-N-acetyl-alpha-D-muramoyl-L-alanine + ADP + phosphate + H(+). It functions in the pathway cell wall biogenesis; peptidoglycan biosynthesis. In terms of biological role, cell wall formation. This chain is UDP-N-acetylmuramate--L-alanine ligase, found in Anaeromyxobacter sp. (strain Fw109-5).